The sequence spans 309 residues: Beta-lactamase (309 aa).

A signal peptide spans 1-28 (MMILKNKRMLKIGICVGILGLSITSLEA). The active-site Acyl-ester intermediate is serine 92. The Proton acceptor role is filled by glutamate 188. 254 to 256 (KSG) lines the substrate pocket.

This sequence belongs to the class-A beta-lactamase family.

It catalyses the reaction a beta-lactam + H2O = a substituted beta-amino acid. Functionally, this protein is a beta-lactamase with a substrate specificity for penicillins. This Bacillus thuringiensis protein is Beta-lactamase (bla).